Reading from the N-terminus, the 553-residue chain is Putative transport protein YidE (553 aa).

5 helical membrane passes run 4 to 24, 28 to 48, 65 to 85, 95 to 115, and 158 to 178; these read IALTVSILALVAVVGLFIGNV, GIGLGIGGVLFGGIIVGHFVS, FGLILFVYTIGIQVGPGFFAS, LFAVLIVIIGGLVTAILHKLF, and MSYAMAYPFGICGILFTMWML. 2 consecutive RCK C-terminal domains span residues 191-276 and 279-361; these read QQHE…VIGQ and DTSL…VLGN. 6 helical membrane-spanning segments follow: residues 371–391, 393–413, 439–459, 464–484, 493–513, and 533–553; these read MLPVFIGIGLGVLLGSIPVFV, GFPAALKLGLAGGPLIMALIL, IVLFLSVVGLKSGGDFVNTLV, LSWIGYGALITAVPLITVGIL, YLTMCGMLAGSMTDPPALAFA, and LVMFLRIITPQLLAVLFWSIG.

The protein belongs to the AAE transporter (TC 2.A.81) family. YidE subfamily.

The protein localises to the cell membrane. The chain is Putative transport protein YidE from Escherichia coli O7:K1 (strain IAI39 / ExPEC).